Consider the following 124-residue polypeptide: Putative membrane protein insertion efficiency factor (124 aa).

Belongs to the UPF0161 family.

It is found in the cell inner membrane. In terms of biological role, could be involved in insertion of integral membrane proteins into the membrane. This chain is Putative membrane protein insertion efficiency factor, found in Psychrobacter cryohalolentis (strain ATCC BAA-1226 / DSM 17306 / VKM B-2378 / K5).